The chain runs to 321 residues: 4-hydroxy-3-methylbut-2-enyl diphosphate reductase (321 aa).

A [4Fe-4S] cluster-binding site is contributed by cysteine 13. (2E)-4-hydroxy-3-methylbut-2-enyl diphosphate is bound by residues histidine 41 and histidine 75. Histidine 41 and histidine 75 together coordinate dimethylallyl diphosphate. 2 residues coordinate isopentenyl diphosphate: histidine 41 and histidine 75. Residue cysteine 97 participates in [4Fe-4S] cluster binding. Residue histidine 125 participates in (2E)-4-hydroxy-3-methylbut-2-enyl diphosphate binding. Residue histidine 125 participates in dimethylallyl diphosphate binding. Histidine 125 is a binding site for isopentenyl diphosphate. Glutamate 127 (proton donor) is an active-site residue. A (2E)-4-hydroxy-3-methylbut-2-enyl diphosphate-binding site is contributed by threonine 168. Cysteine 225 contributes to the [4Fe-4S] cluster binding site. The (2E)-4-hydroxy-3-methylbut-2-enyl diphosphate site is built by serine 253, serine 254, asparagine 255, and serine 302. The dimethylallyl diphosphate site is built by serine 253, serine 254, asparagine 255, and serine 302. 4 residues coordinate isopentenyl diphosphate: serine 253, serine 254, asparagine 255, and serine 302.

This sequence belongs to the IspH family. [4Fe-4S] cluster is required as a cofactor.

It catalyses the reaction isopentenyl diphosphate + 2 oxidized [2Fe-2S]-[ferredoxin] + H2O = (2E)-4-hydroxy-3-methylbut-2-enyl diphosphate + 2 reduced [2Fe-2S]-[ferredoxin] + 2 H(+). The enzyme catalyses dimethylallyl diphosphate + 2 oxidized [2Fe-2S]-[ferredoxin] + H2O = (2E)-4-hydroxy-3-methylbut-2-enyl diphosphate + 2 reduced [2Fe-2S]-[ferredoxin] + 2 H(+). It functions in the pathway isoprenoid biosynthesis; dimethylallyl diphosphate biosynthesis; dimethylallyl diphosphate from (2E)-4-hydroxy-3-methylbutenyl diphosphate: step 1/1. The protein operates within isoprenoid biosynthesis; isopentenyl diphosphate biosynthesis via DXP pathway; isopentenyl diphosphate from 1-deoxy-D-xylulose 5-phosphate: step 6/6. In terms of biological role, catalyzes the conversion of 1-hydroxy-2-methyl-2-(E)-butenyl 4-diphosphate (HMBPP) into a mixture of isopentenyl diphosphate (IPP) and dimethylallyl diphosphate (DMAPP). Acts in the terminal step of the DOXP/MEP pathway for isoprenoid precursor biosynthesis. This chain is 4-hydroxy-3-methylbut-2-enyl diphosphate reductase, found in Pelodictyon phaeoclathratiforme (strain DSM 5477 / BU-1).